The following is a 351-amino-acid chain: UDP-N-acetylglucosamine--N-acetylmuramyl-(pentapeptide) pyrophosphoryl-undecaprenol N-acetylglucosamine transferase (351 aa).

Residues 12-14, asparagine 124, arginine 160, serine 188, isoleucine 239, 258-263, and glutamine 283 each bind UDP-N-acetyl-alpha-D-glucosamine; these read TGG and ALTVCE.

The protein belongs to the glycosyltransferase 28 family. MurG subfamily.

The protein resides in the cell inner membrane. It carries out the reaction di-trans,octa-cis-undecaprenyl diphospho-N-acetyl-alpha-D-muramoyl-L-alanyl-D-glutamyl-meso-2,6-diaminopimeloyl-D-alanyl-D-alanine + UDP-N-acetyl-alpha-D-glucosamine = di-trans,octa-cis-undecaprenyl diphospho-[N-acetyl-alpha-D-glucosaminyl-(1-&gt;4)]-N-acetyl-alpha-D-muramoyl-L-alanyl-D-glutamyl-meso-2,6-diaminopimeloyl-D-alanyl-D-alanine + UDP + H(+). It participates in cell wall biogenesis; peptidoglycan biosynthesis. Functionally, cell wall formation. Catalyzes the transfer of a GlcNAc subunit on undecaprenyl-pyrophosphoryl-MurNAc-pentapeptide (lipid intermediate I) to form undecaprenyl-pyrophosphoryl-MurNAc-(pentapeptide)GlcNAc (lipid intermediate II). The protein is UDP-N-acetylglucosamine--N-acetylmuramyl-(pentapeptide) pyrophosphoryl-undecaprenol N-acetylglucosamine transferase of Glaesserella parasuis serovar 5 (strain SH0165) (Haemophilus parasuis).